The primary structure comprises 125 residues: Large ribosomal subunit protein bL12 (125 aa).

The protein belongs to the bacterial ribosomal protein bL12 family. Homodimer. Part of the ribosomal stalk of the 50S ribosomal subunit. Forms a multimeric L10(L12)X complex, where L10 forms an elongated spine to which 2 to 4 L12 dimers bind in a sequential fashion. Binds GTP-bound translation factors.

Functionally, forms part of the ribosomal stalk which helps the ribosome interact with GTP-bound translation factors. Is thus essential for accurate translation. The sequence is that of Large ribosomal subunit protein bL12 from Helicobacter pylori (strain P12).